Here is a 523-residue protein sequence, read N- to C-terminus: Sialate O-acetylesterase (523 aa).

The N-terminal stretch at 1–23 (MVAPGLVLGLVLPLILWADRSAG) is a signal peptide. Asparagine 107, asparagine 138, asparagine 267, asparagine 290, asparagine 401, and asparagine 422 each carry an N-linked (GlcNAc...) asparagine glycan.

It is found in the lysosome. The enzyme catalyses N-acetyl-9-O-acetylneuraminate + H2O = N-acetylneuraminate + acetate + H(+). The catalysed reaction is an Ac-O-9-sialoglycoconjugate + H2O = a sialoglycoconjugate + acetate + H(+). Catalyzes the removal of O-acetyl ester groups from position 9 of the free diacetylated sialate N-acetyl-9-O-acetylneuraminate (Neu5,9Ac2) in the cytosol and of the diacetylated sialate residues of sialylglycoconjugates in the lysosomes. Together with the sialate-O-acetyltransferase they regulate the balance of acetylated sialoglycoconjugates, key players in various processes such as cell-cell interactions, host-pathogen recognition, and tumor antigenicity. This Pongo abelii (Sumatran orangutan) protein is Sialate O-acetylesterase (SIAE).